A 221-amino-acid chain; its full sequence is Probable septum site-determining protein MinC (221 aa).

This sequence belongs to the MinC family. Interacts with MinD and FtsZ.

In terms of biological role, cell division inhibitor that blocks the formation of polar Z ring septums. Rapidly oscillates between the poles of the cell to destabilize FtsZ filaments that have formed before they mature into polar Z rings. Prevents FtsZ polymerization. This chain is Probable septum site-determining protein MinC, found in Aliivibrio fischeri (strain ATCC 700601 / ES114) (Vibrio fischeri).